The primary structure comprises 630 residues: Ubiquitin-like modifier-activating enzyme ATG7 (630 aa).

The GXGXXG motif motif lies at glycine 331–glycine 336. The Glycyl thioester intermediate role is filled by cysteine 507. The segment at alanine 591–alanine 630 is homodimerization.

This sequence belongs to the ATG7 family. Homodimer; homodimerization is required for ATP-binding. Interacts with ATG8 through a thioester bond between Cys-507 and the C-terminal 'Gly-116' of ATG8 and with ATG12 through a thioester bond between Cys-507 and the C-terminal 'Gly-186' of ATG12. Also interacts with ATG3.

Its subcellular location is the cytoplasm. It localises to the preautophagosomal structure. E1-like activating enzyme involved in the 2 ubiquitin-like systems required for cytoplasm to vacuole transport (Cvt) and autophagy. Activates ATG12 for its conjugation with ATG5 and ATG8 for its conjugation with phosphatidylethanolamine. Both systems are needed for the ATG8 association to Cvt vesicles and autophagosomes membranes. Autophagy is essential for maintenance of amino acid levels and protein synthesis under nitrogen starvation. Required for selective autophagic degradation of the nucleus (nucleophagy) as well as for mitophagy which contributes to regulate mitochondrial quantity and quality by eliminating the mitochondria to a basal level to fulfill cellular energy requirements and preventing excess ROS production. Plays a role in the regulation of filamentous growth and chronological longevity. The protein is Ubiquitin-like modifier-activating enzyme ATG7 (ATG7) of Saccharomyces cerevisiae (strain ATCC 204508 / S288c) (Baker's yeast).